A 359-amino-acid polypeptide reads, in one-letter code: DNA replication and repair protein RecF (359 aa).

30–37 contacts ATP; sequence GPNGSGKT.

This sequence belongs to the RecF family.

Its subcellular location is the cytoplasm. Its function is as follows. The RecF protein is involved in DNA metabolism; it is required for DNA replication and normal SOS inducibility. RecF binds preferentially to single-stranded, linear DNA. It also seems to bind ATP. The protein is DNA replication and repair protein RecF of Aliivibrio salmonicida (strain LFI1238) (Vibrio salmonicida (strain LFI1238)).